Consider the following 666-residue polypeptide: Transketolase (666 aa).

His26 serves as a coordination point for substrate. Residues His66 and 114–116 (GPL) contribute to the thiamine diphosphate site. Mg(2+) is bound at residue Asp155. Thiamine diphosphate contacts are provided by Gly156 and Asn185. Asn185 and Ile187 together coordinate Mg(2+). His261, Arg358, and Ser385 together coordinate substrate. Thiamine diphosphate is bound at residue His261. Glu411 serves as the catalytic Proton donor. Residue Phe437 coordinates thiamine diphosphate. Substrate is bound by residues His461, Asp469, and Arg520.

It belongs to the transketolase family. Homodimer. The cofactor is Mg(2+). Requires Ca(2+) as cofactor. Mn(2+) is required as a cofactor. It depends on Co(2+) as a cofactor. Thiamine diphosphate serves as cofactor.

The enzyme catalyses D-sedoheptulose 7-phosphate + D-glyceraldehyde 3-phosphate = aldehydo-D-ribose 5-phosphate + D-xylulose 5-phosphate. Functionally, catalyzes the transfer of a two-carbon ketol group from a ketose donor to an aldose acceptor, via a covalent intermediate with the cofactor thiamine pyrophosphate. This is Transketolase (tkt) from Buchnera aphidicola subsp. Baizongia pistaciae (strain Bp).